A 330-amino-acid polypeptide reads, in one-letter code: Serine/threonine-protein phosphatase beta isoform (330 aa).

Mn(2+)-binding residues include aspartate 63, histidine 65, aspartate 91, and asparagine 123. The Proton donor role is filled by histidine 124. Residues histidine 172 and histidine 247 each contribute to the Mn(2+) site. Positions 308–319 are enriched in polar residues; the sequence is GMNSSRPTTPQR. Residues 308–330 form a disordered region; the sequence is GMNSSRPTTPQRSAPMLATNKKK. Residues threonine 315 and threonine 316 each carry the phosphothreonine modification.

It belongs to the PPP phosphatase family. PP-1 subfamily. In terms of assembly, interacts with Nop17l. Interacts with uri; uri inhibits flw phosphatase activity. Mn(2+) is required as a cofactor.

The catalysed reaction is O-phospho-L-seryl-[protein] + H2O = L-seryl-[protein] + phosphate. The enzyme catalyses O-phospho-L-threonyl-[protein] + H2O = L-threonyl-[protein] + phosphate. Required for cell adhesion in non-muscle tissues and in maintenance of muscle attachment. Vital for larval development. This chain is Serine/threonine-protein phosphatase beta isoform (flw), found in Drosophila melanogaster (Fruit fly).